Reading from the N-terminus, the 98-residue chain is Putative protein adenylyltransferase MJ1217 (98 aa).

The GSX(10)DXD motif motif lies at 31–45 (GSYAREEQKETSDID). Mg(2+) contacts are provided by D43, D45, and D75.

The protein belongs to the MntA antitoxin family. Probably forms a complex with cognate toxin MJ1216. Mg(2+) is required as a cofactor.

It carries out the reaction L-tyrosyl-[protein] + ATP = O-(5'-adenylyl)-L-tyrosyl-[protein] + diphosphate. The enzyme catalyses O-(5'-adenylyl)-L-tyrosyl-[protein] + ATP = O-[5'-(adenylyl-(5'-&gt;3')-adenylyl)]-L-tyrosyl-[protein] + diphosphate. Probable antitoxin component of a putative type VII toxin-antitoxin (TA) system. Neutralizes cognate toxic MJ1216 by di-AMPylation. In Methanocaldococcus jannaschii (strain ATCC 43067 / DSM 2661 / JAL-1 / JCM 10045 / NBRC 100440) (Methanococcus jannaschii), this protein is Putative protein adenylyltransferase MJ1217.